Consider the following 145-residue polypeptide: Ventricular natriuretic peptide (145 aa).

An N-terminal signal peptide occupies residues 1–24 (MRMGKIAVGYGFLLLLVFQLGVRA). Cys-117 and Cys-133 are oxidised to a cystine.

This sequence belongs to the natriuretic peptide family. In terms of tissue distribution, heart atrium and ventricle, and to a very low extent in brain.

It is found in the secreted. Its function is as follows. Exhibits natriuretic and vasodepressor activity. The sequence is that of Ventricular natriuretic peptide (vnp) from Acipenser transmontanus (White sturgeon).